A 365-amino-acid polypeptide reads, in one-letter code: Putative clathrin assembly protein At4g40080 (365 aa).

The region spanning 29–167 (NTKSKTLSFH…STSRIMGFFI (139 aa)) is the ENTH domain.

It is found in the membrane. It localises to the clathrin-coated pit. The protein localises to the golgi apparatus. The protein resides in the cytoplasmic vesicle. Its subcellular location is the clathrin-coated vesicle. In Arabidopsis thaliana (Mouse-ear cress), this protein is Putative clathrin assembly protein At4g40080.